The primary structure comprises 211 residues: NADH-quinone oxidoreductase subunit C (211 aa).

It belongs to the complex I 30 kDa subunit family. As to quaternary structure, NDH-1 is composed of 14 different subunits. Subunits NuoB, C, D, E, F, and G constitute the peripheral sector of the complex.

The protein resides in the cell inner membrane. The catalysed reaction is a quinone + NADH + 5 H(+)(in) = a quinol + NAD(+) + 4 H(+)(out). NDH-1 shuttles electrons from NADH, via FMN and iron-sulfur (Fe-S) centers, to quinones in the respiratory chain. The immediate electron acceptor for the enzyme in this species is believed to be ubiquinone. Couples the redox reaction to proton translocation (for every two electrons transferred, four hydrogen ions are translocated across the cytoplasmic membrane), and thus conserves the redox energy in a proton gradient. In Azorhizobium caulinodans (strain ATCC 43989 / DSM 5975 / JCM 20966 / LMG 6465 / NBRC 14845 / NCIMB 13405 / ORS 571), this protein is NADH-quinone oxidoreductase subunit C.